The sequence spans 339 residues: 4-hydroxy-2-oxovalerate aldolase (339 aa).

Residues 8-260 (IILHDMCLRD…STDVDVFKLM (253 aa)) enclose the Pyruvate carboxyltransferase domain. 16-17 (RD) serves as a coordination point for substrate. D17 serves as a coordination point for Mn(2+). The active-site Proton acceptor is the H20. Substrate is bound by residues S170 and H199. Positions 199 and 201 each coordinate Mn(2+). A substrate-binding site is contributed by Y290.

It belongs to the 4-hydroxy-2-oxovalerate aldolase family.

It catalyses the reaction (S)-4-hydroxy-2-oxopentanoate = acetaldehyde + pyruvate. The polypeptide is 4-hydroxy-2-oxovalerate aldolase (Shewanella woodyi (strain ATCC 51908 / MS32)).